A 125-amino-acid polypeptide reads, in one-letter code: Cystatin-like cysteine protease inhibitor EPIC2B (125 aa).

The N-terminal stretch at 1–21 (MSFLRPTLALLAVTALVTTSA) is a signal peptide. A glycan (N-linked (GlcNAc...) asparagine) is linked at N45. Residues 68–72 (QVVSG) carry the Secondary area of contact motif.

Belongs to the cystatin family. Interacts with the host papain-like cysteine protease PIP1. Interacts with the host papain-like cysteine protease RCR3. Interacts with the host papain-like cysteine protease C14.

Its subcellular location is the secreted. Its function is as follows. Secreted effector that interacts with and inhibits the pathogenesis-related papain-like cysteine proteases C14, PIP1 and RCR3 of host plants. Inhibition of host proteases by a pathogen extracellular protease inhibitor forms a specific type of defense-counterdefense mechanism between plants and microbial pathogens. This chain is Cystatin-like cysteine protease inhibitor EPIC2B, found in Phytophthora infestans (strain T30-4) (Potato late blight agent).